A 269-amino-acid chain; its full sequence is Shikimate dehydrogenase (NADP(+)) (269 aa).

Residues 17-19 (SKS) and threonine 64 contribute to the shikimate site. Lysine 68 functions as the Proton acceptor in the catalytic mechanism. Residue glutamate 80 coordinates NADP(+). The shikimate site is built by asparagine 89 and aspartate 105. NADP(+) contacts are provided by residues 130-134 (GAGGA), 154-159 (NRTRAK), and methionine 213. Tyrosine 215 is a binding site for shikimate. Glycine 237 contributes to the NADP(+) binding site.

It belongs to the shikimate dehydrogenase family. Homodimer.

The catalysed reaction is shikimate + NADP(+) = 3-dehydroshikimate + NADPH + H(+). Its pathway is metabolic intermediate biosynthesis; chorismate biosynthesis; chorismate from D-erythrose 4-phosphate and phosphoenolpyruvate: step 4/7. Involved in the biosynthesis of the chorismate, which leads to the biosynthesis of aromatic amino acids. Catalyzes the reversible NADPH linked reduction of 3-dehydroshikimate (DHSA) to yield shikimate (SA). The chain is Shikimate dehydrogenase (NADP(+)) from Neisseria meningitidis serogroup C / serotype 2a (strain ATCC 700532 / DSM 15464 / FAM18).